The following is an 80-amino-acid chain: Raniseptin-4 (80 aa).

An N-terminal signal peptide occupies residues 1–22; that stretch reads MAFLKKSLFLVLFLGIVSLSIC. The propeptide occupies 23 to 49; it reads EEEKREGEEEEKQEEENEELSEEELRD.

The protein belongs to the frog skin active peptide (FSAP) family. Dermaseptin subfamily. Expressed by the skin glands.

The protein localises to the secreted. Has antibacterial activity. This is Raniseptin-4 from Boana raniceps (Chaco tree frog).